A 739-amino-acid polypeptide reads, in one-letter code: BEL1-like homeodomain protein 2 (739 aa).

Disordered regions lie at residues 23 to 73 and 143 to 222; these read SQDY…ESSV and LMNP…NSQT. Over residues 41 to 58 the composition is skewed to polar residues; sequence NFSNGFDRSDSPNLTTQQ. Positions 145–155 are enriched in pro residues; the sequence is NPPPPQQPPSP. A compositionally biased stretch (low complexity) spans 179–190; that stretch reads TNTTHHQNYTNH. An SR/KY domain region spans residues 316–332; sequence SRYTTAAQELLEEFCSV. The disordered stretch occupies residues 341–378; it reads KLGNSSNPNTCGGDGGGSSPSSAGANKEHPPLSASDRI. The segment at 376 to 447 is BELL domain; that stretch reads DRIEHQRRKV…CLKDAVAAQL (72 aa). The homeobox DNA-binding region spans 498–560; that stretch reads AWRPQRGLPE…NARVRLWKPM (63 aa). Positions 567–627 are disordered; it reads QESKEREREE…TAPDASDADA (61 aa). The span at 576–585 shows a compositional bias: acidic residues; the sequence is EELEENEEDQ. The span at 586–596 shows a compositional bias: basic and acidic residues; it reads ETKNSNDDKST. A compositionally biased stretch (low complexity) spans 597–627; sequence KSNNNESNFTAVRTTSQTPTTTAPDASDADA.

Belongs to the TALE/BELL homeobox family. In terms of assembly, may form heterodimeric complexes with TALE/KNOX proteins STM, KNAT1/BP, KNAT2 and KNAT5. Interacts with OFP1, OFP2, OFP4 and OFP5. Interacts with KNATM, isoform KNATM-B. As to expression, expressed in lateral organs.

The protein localises to the nucleus. Functionally, transcription factor that establishes leaf shape by repressing growth in specific subdomains of the leaf. Negatively regulates knox homeobox gene KNAT1/BP expression. The chain is BEL1-like homeodomain protein 2 (BLH2) from Arabidopsis thaliana (Mouse-ear cress).